The sequence spans 241 residues: Carboxy-S-adenosyl-L-methionine synthase (241 aa).

S-adenosyl-L-methionine-binding positions include tyrosine 38, 63-65 (GCS), 88-89 (DN), 116-117 (DI), asparagine 131, and arginine 198.

It belongs to the class I-like SAM-binding methyltransferase superfamily. Cx-SAM synthase family. In terms of assembly, homodimer.

It catalyses the reaction prephenate + S-adenosyl-L-methionine = carboxy-S-adenosyl-L-methionine + 3-phenylpyruvate + H2O. In terms of biological role, catalyzes the conversion of S-adenosyl-L-methionine (SAM) to carboxy-S-adenosyl-L-methionine (Cx-SAM). This chain is Carboxy-S-adenosyl-L-methionine synthase, found in Haemophilus influenzae (strain ATCC 51907 / DSM 11121 / KW20 / Rd).